The following is a 281-amino-acid chain: Ribosomal RNA small subunit methyltransferase A (281 aa).

S-adenosyl-L-methionine is bound by residues N36, L38, G63, E84, D109, and N127.

This sequence belongs to the class I-like SAM-binding methyltransferase superfamily. rRNA adenine N(6)-methyltransferase family. RsmA subfamily.

It is found in the cytoplasm. It carries out the reaction adenosine(1518)/adenosine(1519) in 16S rRNA + 4 S-adenosyl-L-methionine = N(6)-dimethyladenosine(1518)/N(6)-dimethyladenosine(1519) in 16S rRNA + 4 S-adenosyl-L-homocysteine + 4 H(+). In terms of biological role, specifically dimethylates two adjacent adenosines (A1518 and A1519) in the loop of a conserved hairpin near the 3'-end of 16S rRNA in the 30S particle. May play a critical role in biogenesis of 30S subunits. This chain is Ribosomal RNA small subunit methyltransferase A, found in Borreliella burgdorferi (strain ATCC 35210 / DSM 4680 / CIP 102532 / B31) (Borrelia burgdorferi).